We begin with the raw amino-acid sequence, 187 residues long: Elongation factor P (187 aa).

This sequence belongs to the elongation factor P family.

Its subcellular location is the cytoplasm. It participates in protein biosynthesis; polypeptide chain elongation. Involved in peptide bond synthesis. Stimulates efficient translation and peptide-bond synthesis on native or reconstituted 70S ribosomes in vitro. Probably functions indirectly by altering the affinity of the ribosome for aminoacyl-tRNA, thus increasing their reactivity as acceptors for peptidyl transferase. The chain is Elongation factor P from Chelativorans sp. (strain BNC1).